Here is a 284-residue protein sequence, read N- to C-terminus: Four and a half LIM domains protein 5 (284 aa).

The C4-type zinc finger occupies 8 to 32 (CQYCTASLLGKKYVLKDDNLYCISC). LIM zinc-binding domains follow at residues 39-100 (NYCE…ECSS), 101-160 (KCFH…KEFA), 161-220 (HYCN…LYAK), and 221-283 (KCAA…ADTD).

In terms of assembly, interacts with CREM (via the third LIM domain). Interacts (via second LIM domain) with SPAG8.

It is found in the nucleus. May be involved in the regulation of spermatogenesis. Stimulates CREM transcriptional activity in a phosphorylation-independent manner. The chain is Four and a half LIM domains protein 5 (Fhl5) from Rattus norvegicus (Rat).